Here is a 520-residue protein sequence, read N- to C-terminus: GMP synthase [glutamine-hydrolyzing] (520 aa).

The region spanning 12 to 205 is the Glutamine amidotransferase type-1 domain; sequence KIIVLDYGSQ…AISICGARGD (194 aa). Cys89 functions as the Nucleophile in the catalytic mechanism. Residues His179 and Glu181 contribute to the active site. Residues 206–395 form the GMPS ATP-PPase domain; it reads WSMDNFIDME…LGMPEEIVWR (190 aa). 233 to 239 is a binding site for ATP; that stretch reads SGGVDSS.

Homodimer.

It catalyses the reaction XMP + L-glutamine + ATP + H2O = GMP + L-glutamate + AMP + diphosphate + 2 H(+). It functions in the pathway purine metabolism; GMP biosynthesis; GMP from XMP (L-Gln route): step 1/1. Functionally, catalyzes the synthesis of GMP from XMP. The polypeptide is GMP synthase [glutamine-hydrolyzing] (Streptococcus pyogenes serotype M5 (strain Manfredo)).